A 152-amino-acid chain; its full sequence is Putative pre-16S rRNA nuclease (152 aa).

Belongs to the YqgF nuclease family.

The protein localises to the cytoplasm. Could be a nuclease involved in processing of the 5'-end of pre-16S rRNA. This Sphingopyxis alaskensis (strain DSM 13593 / LMG 18877 / RB2256) (Sphingomonas alaskensis) protein is Putative pre-16S rRNA nuclease.